The primary structure comprises 113 residues: CRISPR-associated endoribonuclease Cas2 (113 aa).

Mg(2+) is bound at residue Asp33.

This sequence belongs to the CRISPR-associated endoribonuclease Cas2 protein family. Homodimer, forms a heterotetramer with a Cas1 homodimer. Mg(2+) serves as cofactor.

In terms of biological role, CRISPR (clustered regularly interspaced short palindromic repeat), is an adaptive immune system that provides protection against mobile genetic elements (viruses, transposable elements and conjugative plasmids). CRISPR clusters contain sequences complementary to antecedent mobile elements and target invading nucleic acids. CRISPR clusters are transcribed and processed into CRISPR RNA (crRNA). Functions as a ssRNA-specific endoribonuclease. Involved in the integration of spacer DNA into the CRISPR cassette. The type III-A Csm effector complex binds crRNA and acts as a crRNA-guided RNase, DNase and cyclic oligoadenylate synthase; binding of target RNA cognate to the crRNA is required for all activities. This chain is CRISPR-associated endoribonuclease Cas2, found in Mycobacterium tuberculosis (strain CDC 1551 / Oshkosh).